The sequence spans 634 residues: Threonine--tRNA ligase (634 aa).

The TGS domain occupies 1 to 61 (MISLKFPNNE…SESGEFRLYT (61 aa)). The tract at residues 242–532 (DHRKIGQELD…LIEHYAGAFP (291 aa)) is catalytic. Zn(2+)-binding residues include cysteine 333, histidine 384, and histidine 509.

The protein belongs to the class-II aminoacyl-tRNA synthetase family. Homodimer. Requires Zn(2+) as cofactor.

The protein localises to the cytoplasm. The enzyme catalyses tRNA(Thr) + L-threonine + ATP = L-threonyl-tRNA(Thr) + AMP + diphosphate + H(+). In terms of biological role, catalyzes the attachment of threonine to tRNA(Thr) in a two-step reaction: L-threonine is first activated by ATP to form Thr-AMP and then transferred to the acceptor end of tRNA(Thr). Also edits incorrectly charged L-seryl-tRNA(Thr). This chain is Threonine--tRNA ligase, found in Carboxydothermus hydrogenoformans (strain ATCC BAA-161 / DSM 6008 / Z-2901).